The primary structure comprises 81 residues: Photosystem I iron-sulfur center (81 aa).

2 4Fe-4S ferredoxin-type domains span residues 2-31 and 39-68; these read SHSV…MVPW and IAAS…IRVY. Residues C11, C14, C17, C21, C48, C51, C54, and C58 each coordinate [4Fe-4S] cluster.

As to quaternary structure, the cyanobacterial PSI reaction center is composed of one copy each of PsaA,B,C,D,E,F,I,J,K,L,M and X, and forms trimeric complexes. [4Fe-4S] cluster serves as cofactor.

The protein resides in the cellular thylakoid membrane. The catalysed reaction is reduced [plastocyanin] + hnu + oxidized [2Fe-2S]-[ferredoxin] = oxidized [plastocyanin] + reduced [2Fe-2S]-[ferredoxin]. Functionally, apoprotein for the two 4Fe-4S centers FA and FB of photosystem I (PSI); essential for photochemical activity. FB is the terminal electron acceptor of PSI, donating electrons to ferredoxin. The C-terminus interacts with PsaA/B/D and helps assemble the protein into the PSI complex. Required for binding of PsaD and PsaE to PSI. PSI is a plastocyanin/cytochrome c6-ferredoxin oxidoreductase, converting photonic excitation into a charge separation, which transfers an electron from the donor P700 chlorophyll pair to the spectroscopically characterized acceptors A0, A1, FX, FA and FB in turn. The chain is Photosystem I iron-sulfur center from Synechococcus elongatus (strain ATCC 33912 / PCC 7942 / FACHB-805) (Anacystis nidulans R2).